The sequence spans 268 residues: Lipopolysaccharide core heptose(I) kinase WaaP (268 aa).

Residues Tyr30, Tyr48, and Tyr98 each carry the phosphotyrosine; by autocatalysis modification. Residue Asp163 is part of the active site. Phosphotyrosine; by autocatalysis is present on residues Tyr165, Tyr211, Tyr231, Tyr258, and Tyr264.

Belongs to the protein kinase superfamily. KdkA/RfaP family. Interacts with acyl-AcpP. The WaaP hydrophobic channel can accommodate acyl chains of different lengths, but myristyl-ACP is likely its physiological binding partner. It depends on Mg(2+) as a cofactor.

It is found in the cytoplasm. The enzyme catalyses an L-alpha-D-Hep-(1-&gt;3)-L-alpha-D-Hep-(1-&gt;5)-[alpha-Kdo-(2-&gt;4)]-alpha-Kdo-(2-&gt;6)-lipid A + ATP = an L-alpha-D-Hep-(1-&gt;3)-4-O-phospho-L-alpha-D-Hep-(1-&gt;5)-[alpha-Kdo-(2-&gt;4)]-alpha-Kdo-(2-&gt;6)-lipid A + ADP + H(+). It carries out the reaction L-tyrosyl-[protein] + ATP = O-phospho-L-tyrosyl-[protein] + ADP + H(+). The protein operates within bacterial outer membrane biogenesis; LPS core biosynthesis. Its activity is regulated as follows. Acylated-acyl carrier protein (acyl-ACP) acts as a very tightly bound cofactor necessary for the production and stability of active WaaP kinase. Its function is as follows. Kinase involved in the biosynthesis of the core oligosaccharide region of lipopolysaccharide (LPS). Catalyzes the phosphorylation of heptose I (HepI), the first heptose added to the Kdo2-lipid A module. Also has protein-tyrosine kinase activity: autophosphorylates on all Tyr residues; in vitro can phosphorylate poly(Glu,Tyr). The sequence is that of Lipopolysaccharide core heptose(I) kinase WaaP from Pseudomonas aeruginosa (strain ATCC 15692 / DSM 22644 / CIP 104116 / JCM 14847 / LMG 12228 / 1C / PRS 101 / PAO1).